An 883-amino-acid chain; its full sequence is AP-5 complex subunit beta-1 (883 aa).

In terms of assembly, probably part of the adaptor protein complex 5 (AP-5).

Functionally, as part of AP-5, a probable fifth adaptor protein complex, it may be involved in endosomal transport. This is AP-5 complex subunit beta-1 (ap5b1) from Xenopus tropicalis (Western clawed frog).